The chain runs to 341 residues: MTTQQPVAVLGGGSFGTAIANLLAENGHQVLQWMRDPEQAQAIRVNRENPRYLKGIKVRPEVEPVTDITATLEACELIFVALPSSALRAVLSPHVERLNGKMLVSLTKGIEAQSFKLMSQILEEIVPQARIGVLSGPNLAREIAEHALTATVVASEDEALCQQVQAALHGRTFRVYASNDRFGVELGGALKNVYAIIAGMAVALDMGENTKSMLITRALAEMTRFAVSQGANPMTFLGLAGVGDLIVTCSSPKSRNYQVGFALGQGLTLEAAVTRLGEVAEGVNTLKVLKVKAQEVQVYMPLVAGLHAILFEGRTLSQVIEALMRAEPKTDVDFISITGFN.

Positions 14, 15, 35, and 108 each coordinate NADPH. 2 residues coordinate sn-glycerol 3-phosphate: K108 and G136. An NADPH-binding site is contributed by A140. Sn-glycerol 3-phosphate contacts are provided by K191, D244, S254, R255, and N256. K191 functions as the Proton acceptor in the catalytic mechanism. R255 provides a ligand contact to NADPH. V279 and E281 together coordinate NADPH.

Belongs to the NAD-dependent glycerol-3-phosphate dehydrogenase family.

Its subcellular location is the cytoplasm. The enzyme catalyses sn-glycerol 3-phosphate + NAD(+) = dihydroxyacetone phosphate + NADH + H(+). It catalyses the reaction sn-glycerol 3-phosphate + NADP(+) = dihydroxyacetone phosphate + NADPH + H(+). The protein operates within membrane lipid metabolism; glycerophospholipid metabolism. Catalyzes the reduction of the glycolytic intermediate dihydroxyacetone phosphate (DHAP) to sn-glycerol 3-phosphate (G3P), the key precursor for phospholipid synthesis. The chain is Glycerol-3-phosphate dehydrogenase [NAD(P)+] from Pseudomonas savastanoi pv. phaseolicola (strain 1448A / Race 6) (Pseudomonas syringae pv. phaseolicola (strain 1448A / Race 6)).